The primary structure comprises 110 residues: Small ribosomal subunit protein bS16 (110 aa).

A disordered region spans residues 79 to 110; the sequence is AAGVKKREARNNPQKAVPRKERKAQAEAAAKG.

Belongs to the bacterial ribosomal protein bS16 family.

This is Small ribosomal subunit protein bS16 from Bradyrhizobium diazoefficiens (strain JCM 10833 / BCRC 13528 / IAM 13628 / NBRC 14792 / USDA 110).